Consider the following 584-residue polypeptide: Kelch domain-containing protein 4 (584 aa).

Basic residues predominate over residues 1–10 (MGKKGKKEKK). Disordered regions lie at residues 1–33 (MGKK…RKEE) and 50–69 (KTQV…NASL). Over residues 11-24 (GRGAEKTAAKMEKK) the composition is skewed to basic and acidic residues. Kelch repeat units follow at residues 77–129 (ELIL…VVPQ), 133–187 (QLWV…AWKR), 188–238 (QLIL…LMAV), 243–289 (SIAI…INPS), and 308–361 (QILV…RRGK). 3 disordered regions span residues 348-381 (KGPK…APEP), 405-433 (SGLG…CPRS), and 482-533 (PKSQ…EQFE). S418 is modified (phosphoserine). Residues 443-494 (LLYVYGGMFEAGDRQVTLSDLYCLDLHKMEEWKTLVEMDPKSQEWLEESDSE) form a Kelch 6 repeat. Residues 487-519 (WLEESDSEEDSSSDEESEDGEDKDQEDSAEEGA) show a composition bias toward acidic residues. The span at 520–533 (DPQHPEVARGEQFE) shows a compositional bias: basic and acidic residues.

The chain is Kelch domain-containing protein 4 (Klhdc4) from Mus musculus (Mouse).